The sequence spans 346 residues: Cytosolic sulfotransferase 17 (346 aa).

89–94 provides a ligand contact to 3'-phosphoadenylyl sulfate; the sequence is KTGTTW. Residue His151 is the Proton acceptor of the active site. Residues Arg173, Ser181, Tyr239, and 309–311 each bind 3'-phosphoadenylyl sulfate; that span reads RKG.

Belongs to the sulfotransferase 1 family. As to expression, highly expressed in roots, stems and mature leaves. Low expression in young leaves and flowers. Barely detected in siliques.

The protein localises to the cytoplasm. It catalyses the reaction an aliphatic (Z)-desulfo-glucosinolate + 3'-phosphoadenylyl sulfate = a (Z)-omega-(methylsulfanyl)-N-sulfo-alkylhydroximate S-glucoside + adenosine 3',5'-bisphosphate + H(+). With respect to regulation, inhibited by phosphoadenosine 5'-phosphate (PAP). In terms of biological role, sulfotransferase that utilizes 3'-phospho-5'-adenylyl sulfate (PAPS) as sulfonate donor to catalyze the sulfate conjugation of desulfo-glucosinolates (dsGSs), the final step in the biosynthesis of the glucosinolate core structure. Substrate preference is desulfo-benzyl glucosinolate &gt; desulfo-6-methylthiohexyl glucosinolate. Increased specific activity with increasing chain length of desulfo-glucosinolate derived from methionine. Preferred substrate is desulfo-8-methylthiooctyl glucosinolate. This Arabidopsis thaliana (Mouse-ear cress) protein is Cytosolic sulfotransferase 17 (SOT17).